A 212-amino-acid chain; its full sequence is Ribonuclease HII (212 aa).

In terms of domain architecture, RNase H type-2 spans 18-212 (GCVFGVDEAG…APVAQQELFR (195 aa)). Residues D24, E25, and D118 each coordinate a divalent metal cation.

Belongs to the RNase HII family. It depends on Mn(2+) as a cofactor. Requires Mg(2+) as cofactor.

It is found in the cytoplasm. It catalyses the reaction Endonucleolytic cleavage to 5'-phosphomonoester.. Endonuclease that specifically degrades the RNA of RNA-DNA hybrids. The sequence is that of Ribonuclease HII from Erythrobacter litoralis (strain HTCC2594).